The following is a 161-amino-acid chain: Ribosome maturation factor RimP (161 aa).

It belongs to the RimP family.

It is found in the cytoplasm. In terms of biological role, required for maturation of 30S ribosomal subunits. This is Ribosome maturation factor RimP from Rickettsia massiliae (strain Mtu5).